Reading from the N-terminus, the 366-residue chain is 3-dehydroquinate synthase (366 aa).

NAD(+) is bound by residues 74–79 (SGEAAK), 108–112 (GVVGD), 132–133 (TT), K144, K153, and 171–174 (FLRT). Positions 186, 249, and 266 each coordinate Zn(2+).

The protein belongs to the sugar phosphate cyclases superfamily. Dehydroquinate synthase family. Co(2+) serves as cofactor. Requires Zn(2+) as cofactor. It depends on NAD(+) as a cofactor.

It is found in the cytoplasm. It catalyses the reaction 7-phospho-2-dehydro-3-deoxy-D-arabino-heptonate = 3-dehydroquinate + phosphate. It participates in metabolic intermediate biosynthesis; chorismate biosynthesis; chorismate from D-erythrose 4-phosphate and phosphoenolpyruvate: step 2/7. Functionally, catalyzes the conversion of 3-deoxy-D-arabino-heptulosonate 7-phosphate (DAHP) to dehydroquinate (DHQ). This is 3-dehydroquinate synthase from Geobacillus thermodenitrificans (strain NG80-2).